The primary structure comprises 387 residues: Formate-dependent phosphoribosylglycinamide formyltransferase (387 aa).

Residues 15–16 and E75 contribute to the N(1)-(5-phospho-beta-D-ribosyl)glycinamide site; that span reads EL. Residues R106, K147, 152-157, 187-190, and E195 each bind ATP; these read SSGKGQ and EEFI. The region spanning 111-301 is the ATP-grasp domain; that stretch reads DLASNELNIR…EFELHLRAVL (191 aa). Mg(2+) contacts are provided by E260 and E272. Residues D279, K349, and 356–357 contribute to the N(1)-(5-phospho-beta-D-ribosyl)glycinamide site; that span reads RR.

It belongs to the PurK/PurT family. Homodimer.

It carries out the reaction N(1)-(5-phospho-beta-D-ribosyl)glycinamide + formate + ATP = N(2)-formyl-N(1)-(5-phospho-beta-D-ribosyl)glycinamide + ADP + phosphate + H(+). It participates in purine metabolism; IMP biosynthesis via de novo pathway; N(2)-formyl-N(1)-(5-phospho-D-ribosyl)glycinamide from N(1)-(5-phospho-D-ribosyl)glycinamide (formate route): step 1/1. Functionally, involved in the de novo purine biosynthesis. Catalyzes the transfer of formate to 5-phospho-ribosyl-glycinamide (GAR), producing 5-phospho-ribosyl-N-formylglycinamide (FGAR). Formate is provided by PurU via hydrolysis of 10-formyl-tetrahydrofolate. This is Formate-dependent phosphoribosylglycinamide formyltransferase from Prochlorococcus marinus (strain NATL1A).